The chain runs to 74 residues: Protein SlyX homolog (74 aa).

This sequence belongs to the SlyX family.

In Neisseria meningitidis serogroup C / serotype 2a (strain ATCC 700532 / DSM 15464 / FAM18), this protein is Protein SlyX homolog.